Consider the following 62-residue polypeptide: Metallothionein-4 (62 aa).

A divalent metal cation-binding residues include Cys-6, Cys-8, Cys-14, Cys-16, Cys-20, Cys-22, Cys-25, Cys-27, Cys-34, Cys-35, Cys-37, Cys-38, Cys-42, Cys-45, Cys-49, Cys-51, Cys-58, Cys-60, and Cys-61.

This sequence belongs to the metallothionein superfamily. Type 1 family.

Its function is as follows. Seems to bind zinc and copper. Could play a special role in regulating zinc metabolism during the differentiation of stratified epithelia. The protein is Metallothionein-4 (MT4) of Homo sapiens (Human).